Consider the following 72-residue polypeptide: Translational regulator CsrA (72 aa).

This sequence belongs to the CsrA/RsmA family. In terms of assembly, homodimer; the beta-strands of each monomer intercalate to form a hydrophobic core, while the alpha-helices form wings that extend away from the core.

It is found in the cytoplasm. A translational regulator that binds mRNA to regulate translation initiation and/or mRNA stability. Usually binds in the 5'-UTR at or near the Shine-Dalgarno sequence preventing ribosome-binding, thus repressing translation. Its main target seems to be the major flagellin gene, while its function is anatagonized by FliW. This Clostridium botulinum (strain 657 / Type Ba4) protein is Translational regulator CsrA.